The primary structure comprises 289 residues: Elongation factor Ts (289 aa).

The interval 82 to 85 is involved in Mg(2+) ion dislocation from EF-Tu; it reads TDFL.

Belongs to the EF-Ts family.

The protein localises to the cytoplasm. Its function is as follows. Associates with the EF-Tu.GDP complex and induces the exchange of GDP to GTP. It remains bound to the aminoacyl-tRNA.EF-Tu.GTP complex up to the GTP hydrolysis stage on the ribosome. In Pseudomonas aeruginosa (strain LESB58), this protein is Elongation factor Ts.